Here is a 362-residue protein sequence, read N- to C-terminus: D-alanine--D-alanine ligase (362 aa).

Positions 134–345 (KILAQRAGVP…YPDLITRLIR (212 aa)) constitute an ATP-grasp domain. 170 to 225 (GQLGTSNLFVKPSNQGSSVGITHVTDDSNYAEALAEAFKYDDKVLVEEGIVGTEVE) contributes to the ATP binding site. Mg(2+)-binding residues include Asp-298, Glu-312, and Asn-314.

It belongs to the D-alanine--D-alanine ligase family. The cofactor is Mg(2+). Mn(2+) serves as cofactor.

It localises to the cytoplasm. The catalysed reaction is 2 D-alanine + ATP = D-alanyl-D-alanine + ADP + phosphate + H(+). It participates in cell wall biogenesis; peptidoglycan biosynthesis. Functionally, cell wall formation. This chain is D-alanine--D-alanine ligase, found in Lactobacillus delbrueckii subsp. bulgaricus (strain ATCC 11842 / DSM 20081 / BCRC 10696 / JCM 1002 / NBRC 13953 / NCIMB 11778 / NCTC 12712 / WDCM 00102 / Lb 14).